The chain runs to 96 residues: Co-chaperonin GroES (96 aa).

The protein belongs to the GroES chaperonin family. In terms of assembly, heptamer of 7 subunits arranged in a ring. Interacts with the chaperonin GroEL.

It is found in the cytoplasm. Together with the chaperonin GroEL, plays an essential role in assisting protein folding. The GroEL-GroES system forms a nano-cage that allows encapsulation of the non-native substrate proteins and provides a physical environment optimized to promote and accelerate protein folding. GroES binds to the apical surface of the GroEL ring, thereby capping the opening of the GroEL channel. The protein is Co-chaperonin GroES of Shewanella piezotolerans (strain WP3 / JCM 13877).